Reading from the N-terminus, the 672-residue chain is UvrABC system protein B (672 aa).

Residues 26 to 181 (AGLEDGLAYQ…ILQRLAELQY (156 aa)) enclose the Helicase ATP-binding domain. 39–46 (GVTGSGKT) serves as a coordination point for ATP. The short motif at 92–115 (YYDYYQPEAYVPSSDTYIEKDASI) is the Beta-hairpin element. In terms of domain architecture, Helicase C-terminal spans 430-592 (QVDDLLSEIK…ITPKSIQKAV (163 aa)). Residues 631–666 (AKELRKLEEQMYHHARNLEFEEAAAVRDKIQHIRKG) enclose the UVR domain.

The protein belongs to the UvrB family. Forms a heterotetramer with UvrA during the search for lesions. Interacts with UvrC in an incision complex.

It is found in the cytoplasm. Functionally, the UvrABC repair system catalyzes the recognition and processing of DNA lesions. A damage recognition complex composed of 2 UvrA and 2 UvrB subunits scans DNA for abnormalities. Upon binding of the UvrA(2)B(2) complex to a putative damaged site, the DNA wraps around one UvrB monomer. DNA wrap is dependent on ATP binding by UvrB and probably causes local melting of the DNA helix, facilitating insertion of UvrB beta-hairpin between the DNA strands. Then UvrB probes one DNA strand for the presence of a lesion. If a lesion is found the UvrA subunits dissociate and the UvrB-DNA preincision complex is formed. This complex is subsequently bound by UvrC and the second UvrB is released. If no lesion is found, the DNA wraps around the other UvrB subunit that will check the other stand for damage. The sequence is that of UvrABC system protein B from Coxiella burnetii (strain CbuK_Q154) (Coxiella burnetii (strain Q154)).